The chain runs to 464 residues: Soluble pyridine nucleotide transhydrogenase (464 aa).

Position 35–44 (35–44) interacts with FAD; the sequence is DDRRQVGGNC.

This sequence belongs to the class-I pyridine nucleotide-disulfide oxidoreductase family. The cofactor is FAD.

Its subcellular location is the cytoplasm. It carries out the reaction NAD(+) + NADPH = NADH + NADP(+). In terms of biological role, conversion of NADPH, generated by peripheral catabolic pathways, to NADH, which can enter the respiratory chain for energy generation. This is Soluble pyridine nucleotide transhydrogenase from Pseudomonas putida (strain ATCC 47054 / DSM 6125 / CFBP 8728 / NCIMB 11950 / KT2440).